A 1032-amino-acid chain; its full sequence is Probable LRR receptor-like serine/threonine-protein kinase At1g56130 (1032 aa).

A signal peptide spans 1 to 29 (MTRIRRSPCLLLLIIWFMCIAGSVQVVQS). The Extracellular portion of the chain corresponds to 30 to 636 (QNQTGATTHP…PPSKGKNRTG (607 aa)). N-linked (GlcNAc...) asparagine glycosylation is found at Asn31, Asn61, and Asn95. 10 LRR repeats span residues 101–122 (ITNI…LWTL), 123–146 (TYLT…IGNL), 148–170 (RMQW…IGLL), 171–194 (TDLR…IGRC), 196–217 (KLQQ…SFAN), 242–265 (WTKL…SFSN), 290–314 (MKSL…IGEH), 315–338 (SSLR…LFNL), 340–360 (QLTH…TQKT), and 361–385 (QSLR…SLPS). Asn145 carries N-linked (GlcNAc...) asparagine glycosylation. Residue Asn182 is glycosylated (N-linked (GlcNAc...) asparagine). 5 N-linked (GlcNAc...) asparagine glycosylation sites follow: Asn265, Asn302, Asn337, Asn348, and Asn352. 3 N-linked (GlcNAc...) asparagine glycosylation sites follow: Asn394, Asn580, and Asn633. The chain crosses the membrane as a helical span at residues 637–657 (TIVGVIVGVGLLSILAGVVMF). Topologically, residues 658–1032 (TIRKRRKRYT…MLGSKINEGR (375 aa)) are cytoplasmic. Thr683 bears the Phosphothreonine mark. The 275-residue stretch at 694-968 (FDPSNKLGEG…VAMLSGDVEI (275 aa)) folds into the Protein kinase domain. ATP contacts are provided by residues 700–708 (LGEGGFGPV) and Lys722. A Phosphotyrosine modification is found at Tyr767. Asp818 serves as the catalytic Proton acceptor. Phosphoserine is present on residues Ser822 and Ser851. 2 positions are modified to phosphothreonine: Thr852 and Thr857. Position 865 is a phosphotyrosine (Tyr865). The interval 1008–1032 (APGSEISPRDSDFKPMLGSKINEGR) is disordered.

The protein belongs to the protein kinase superfamily. Ser/Thr protein kinase family.

It is found in the cell membrane. The catalysed reaction is L-seryl-[protein] + ATP = O-phospho-L-seryl-[protein] + ADP + H(+). The enzyme catalyses L-threonyl-[protein] + ATP = O-phospho-L-threonyl-[protein] + ADP + H(+). The polypeptide is Probable LRR receptor-like serine/threonine-protein kinase At1g56130 (Arabidopsis thaliana (Mouse-ear cress)).